A 132-amino-acid chain; its full sequence is U11/U12 small nuclear ribonucleoprotein 25 kDa protein (132 aa).

In terms of domain architecture, Ubiquitin-like spans 41-132 (MTVRVCKMDG…VSFIKKLRQK (92 aa)).

Component of the U11/U12 snRNPs that are part of the U12-type spliceosome.

It is found in the nucleus. The sequence is that of U11/U12 small nuclear ribonucleoprotein 25 kDa protein (SNRNP25) from Homo sapiens (Human).